The primary structure comprises 474 residues: MCVICFVKALVHVFKIYLTANYSYNFRSWPVDFRWDDLHVPGTNNSSHRALTCAAAAAGVWLLHDAALGEDALTRPPRGARSQVQCLLQQIRELPSQLASYALAHSLGRWLVYPGSMFLMTRALLPLLQQGQERLVDRYRGRRAKLVACDGNEIDTMFMDRRQHPGSHGRGLCLVICCEGNAGFYEMGCLSAPLEAGYSVLGWNHPGFGGSTGAPFPQHDANAMDVVVKYALHRLHFSPANVVVYGWSIGGFTATWATMTYPELGALVLDATFDDLVPLALKVMPQSWKGLVVRTVREHFNLNVAEQLCCYPGPVLLLRRTQDDVVSTSGHVPSLPSCQVEGDVEGNRGNELLLRLLEHRYPSVMAREGRTVVIRWLRASNLAQETALYARYHVDDEWCLATLRSYREGRQKDLDHTKTWGPHGPSFPWFVGQGLSARRRRHLALFLARRHLKNLEATHCSPLEPEDFQLPWRL.

Residues 175 to 293 (VICCEGNAGF…MPQSWKGLVV (119 aa)) enclose the AB hydrolase-1 domain. Residues serine 248, aspartate 323, and histidine 423 each act as charge relay system in the active site.

It belongs to the AB hydrolase superfamily. ABHD16 family.

It carries out the reaction a 1,2-diacyl-sn-glycero-3-phospho-L-serine + H2O = a 2-acyl-sn-glycero-3-phospho-L-serine + a fatty acid + H(+). The enzyme catalyses a 1-acylglycerol + H2O = glycerol + a fatty acid + H(+). The catalysed reaction is 1-(9Z-octadecenoyl)-glycerol + H2O = glycerol + (9Z)-octadecenoate + H(+). Its function is as follows. Hydrolyzes the sn-1 position of glycerophospholipids with high specificity towards phosphatidylserine (PS), PS-PLA1 enzyme. Also hydrolyzes the acyl chain of glycerolipids with a preference for the monoacylglycerol (MAG) 1-acylglycerol, MAG lipase. Plays a regulatory role in cellular lipid homeostasis by modulating genes involved in neutral lipid degradation and in phospholipid synthesis and composition. The chain is ABHD16B from Rattus norvegicus (Rat).